A 225-amino-acid chain; its full sequence is Putative tyrosine-protein phosphatase OCA1 (225 aa).

A compositionally biased stretch (acidic residues) spans 1–11 (MTDNCREDDDN). The segment at 1-24 (MTDNCREDDDNLGTSGDNALSAPT) is disordered. A compositionally biased stretch (polar residues) spans 12-24 (LGTSGDNALSAPT). The 155-residue stretch at 42–196 (NFCPVERYLY…FDTKSVTIDK (155 aa)) folds into the Tyrosine-protein phosphatase domain. The Phosphocysteine intermediate role is filled by Cys138.

Belongs to the protein-tyrosine phosphatase family.

It localises to the cytoplasm. The enzyme catalyses O-phospho-L-tyrosyl-[protein] + H2O = L-tyrosyl-[protein] + phosphate. Putative tyrosine-protein phosphatase required for protection against superoxide stress. The chain is Putative tyrosine-protein phosphatase OCA1 (OCA1) from Eremothecium gossypii (strain ATCC 10895 / CBS 109.51 / FGSC 9923 / NRRL Y-1056) (Yeast).